The following is a 215-amino-acid chain: uncharacterized protein (215 aa).

Active-site charge relay system residues include Ser114, Asp162, and His194.

This sequence belongs to the AB hydrolase superfamily. AB hydrolase 2 family.

This is an uncharacterized protein from Rickettsia typhi (strain ATCC VR-144 / Wilmington).